The following is a 973-amino-acid chain: Isoleucine--tRNA ligase, mitochondrial (973 aa).

Residues 87–97 (PFANGRLHIGH) carry the 'HIGH' region motif. Residues 625–629 (KQSKS) carry the 'KMSKS' region motif. ATP is bound at residue Lys-628.

It belongs to the class-I aminoacyl-tRNA synthetase family.

It is found in the cytoplasm. It localises to the mitochondrion matrix. The catalysed reaction is tRNA(Ile) + L-isoleucine + ATP = L-isoleucyl-tRNA(Ile) + AMP + diphosphate. This Schizosaccharomyces pombe (strain 972 / ATCC 24843) (Fission yeast) protein is Isoleucine--tRNA ligase, mitochondrial (ism1).